The primary structure comprises 566 residues: Transcription factor P14E8.02 (566 aa).

A disordered region spans residues 1–32; sequence MNISSQNVLLPSPIPSSSPMASHKKSWLSKHP. S73 carries the post-translational modification Phosphoserine. One can recognise an FHA domain in the interval 86–137; it reads NKIGRSSQQCDHVLSTVDKAISRVHAIVTCTQDRMIIECVGWNGMIVSDKMR. 4 disordered regions span residues 191–217, 269–291, 312–334, and 364–437; these read EENREPMSPSPQEALPLMPSSPPSQDY, DCSKNTQLKPSFLPKNTDDLLNG, ESDDLDKNEEISEGEEYTPIEES, and FTNH…TKEN. Residues 314-330 are compositionally biased toward acidic residues; the sequence is DDLDKNEEISEGEEYTP. Composition is skewed to polar residues over residues 373 to 383 and 414 to 428; these read NSNITTSNDSP and DENTNDSNESLPSSH. S379 and S382 each carry phosphoserine.

It belongs to the PLM2/TOS4 family.

Its subcellular location is the nucleus. Probable transcriptional regulatory protein Required for G1/S progression. This is Transcription factor P14E8.02 from Schizosaccharomyces pombe (strain 972 / ATCC 24843) (Fission yeast).